Reading from the N-terminus, the 143-residue chain is Transcriptional regulator MraZ (143 aa).

SpoVT-AbrB domains follow at residues 5-47 (EYRH…PQVE) and 76-119 (ATEC…SKEL).

The protein belongs to the MraZ family. Forms oligomers.

The protein localises to the cytoplasm. It is found in the nucleoid. The protein is Transcriptional regulator MraZ of Halalkalibacterium halodurans (strain ATCC BAA-125 / DSM 18197 / FERM 7344 / JCM 9153 / C-125) (Bacillus halodurans).